The sequence spans 356 residues: Histidinol-phosphate aminotransferase (356 aa).

Lysine 214 carries the post-translational modification N6-(pyridoxal phosphate)lysine.

Belongs to the class-II pyridoxal-phosphate-dependent aminotransferase family. Histidinol-phosphate aminotransferase subfamily. Homodimer. It depends on pyridoxal 5'-phosphate as a cofactor.

The enzyme catalyses L-histidinol phosphate + 2-oxoglutarate = 3-(imidazol-4-yl)-2-oxopropyl phosphate + L-glutamate. The protein operates within amino-acid biosynthesis; L-histidine biosynthesis; L-histidine from 5-phospho-alpha-D-ribose 1-diphosphate: step 7/9. This chain is Histidinol-phosphate aminotransferase, found in Escherichia coli (strain 55989 / EAEC).